Consider the following 417-residue polypeptide: MADIRNYTMNFGPQHPAAHGVLRLVMELDGEVIRRADPHIGLLHRATEKLAENKTYIQSVPYMDRLDYVSMMVNEHAYVMAIEKLLQIDVPIRAQYIRVMFDEITRILNHLLWLGAHALDVGAMTVFLYTFREREDLMDCYEAVSGARLHAAYYRPGGVYRDLPDSMPQYRSSAIHDEKTTTARNENRQGSLLDFIEDFTHRFPGYVDDYETLLTDNRIWKQRLVDIGVVSPDRAKALGFSGPMLRGSGVAWDLRKKQPYEVYDQVDFDIPVGVNGDCYDRYLVRIEEMRQSNYIIKQCIDWMRKNPGPVITSNFKVAPPPRLSMKQNMEEMIHHFKLFTEGMHVPRGEVYAAVEHPKGEFGIYIISDGANMPYRLKIRAPGFAHLAAMDEMARGHMIADLVAIIGTQDIVFGEIDR.

The protein belongs to the complex I 49 kDa subunit family. In terms of assembly, NDH-1 is composed of 14 different subunits. Subunits NuoB, C, D, E, F, and G constitute the peripheral sector of the complex.

It localises to the cell inner membrane. The catalysed reaction is a quinone + NADH + 5 H(+)(in) = a quinol + NAD(+) + 4 H(+)(out). NDH-1 shuttles electrons from NADH, via FMN and iron-sulfur (Fe-S) centers, to quinones in the respiratory chain. The immediate electron acceptor for the enzyme in this species is believed to be ubiquinone. Couples the redox reaction to proton translocation (for every two electrons transferred, four hydrogen ions are translocated across the cytoplasmic membrane), and thus conserves the redox energy in a proton gradient. The protein is NADH-quinone oxidoreductase subunit D of Nitrosomonas eutropha (strain DSM 101675 / C91 / Nm57).